The chain runs to 306 residues: Galactosylgalactosylxylosylprotein 3-beta-glucuronosyltransferase I (306 aa).

Residues 1–11 are Cytoplasmic-facing; the sequence is MSEVRIRPRQV. The helical; Signal-anchor for type II membrane protein transmembrane segment at 12–29 threads the bilayer; the sequence is LILIIVFLVVLMMVHRNG. The Lumenal portion of the chain corresponds to 30–306; that stretch reads KRTCQGPEYL…GQRSDGGMEV (277 aa). Residue asparagine 90 is glycosylated (N-linked (GlcNAc...) asparagine). Aspartate 163 lines the Mn(2+) pocket. The active-site Proton acceptor is glutamate 252.

It belongs to the glycosyltransferase 43 family. The cofactor is Mn(2+).

The protein resides in the golgi apparatus membrane. It carries out the reaction 3-O-(beta-D-galactosyl-(1-&gt;3)-beta-D-galactosyl-(1-&gt;4)-beta-D-xylosyl)-L-seryl-[protein] + UDP-alpha-D-glucuronate = 3-O-(beta-D-GlcA-(1-&gt;3)-beta-D-Gal-(1-&gt;3)-beta-D-Gal-(1-&gt;4)-beta-D-Xyl)-L-seryl-[protein] + UDP + H(+). Its pathway is protein modification; protein glycosylation. Its function is as follows. Involved in the biosynthesis of L2/HNK-1 carbohydrate epitope on both glycolipids and glycoproteins. Shows strict specificity for Gal-beta-1,3-Gal-beta-1,4-Xyl, exhibiting negligible incorporation into other galactoside substrates. The chain is Galactosylgalactosylxylosylprotein 3-beta-glucuronosyltransferase I (GlcAT-I) from Drosophila melanogaster (Fruit fly).